Consider the following 589-residue polypeptide: Probable peptidoglycan D,D-transpeptidase FtsI (589 aa).

The helical transmembrane segment at 47–67 (IFLVMGFFGFCFVGVSLGAGW) threads the bilayer. The Acyl-ester intermediate role is filled by serine 296.

The protein belongs to the transpeptidase family. Interacts with FtsN and FtsW.

It localises to the cell inner membrane. It catalyses the reaction Preferential cleavage: (Ac)2-L-Lys-D-Ala-|-D-Ala. Also transpeptidation of peptidyl-alanyl moieties that are N-acyl substituents of D-alanine.. The protein operates within cell wall biogenesis; peptidoglycan biosynthesis. In terms of biological role, catalyzes cross-linking of the peptidoglycan cell wall at the division septum. The sequence is that of Probable peptidoglycan D,D-transpeptidase FtsI (ftsI) from Caulobacter vibrioides (strain NA1000 / CB15N) (Caulobacter crescentus).